Here is a 231-residue protein sequence, read N- to C-terminus: Chromosome partition protein MukE (231 aa).

The tract at residues 211 to 231 is disordered; the sequence is SLLADEEEQDYNEQAELEGEA. The segment covering 214–231 has biased composition (acidic residues); that stretch reads ADEEEQDYNEQAELEGEA.

This sequence belongs to the MukE family. As to quaternary structure, interacts, and probably forms a ternary complex, with MukF and MukB. The complex formation is stimulated by calcium or magnesium.

Its subcellular location is the cytoplasm. The protein resides in the nucleoid. Involved in chromosome condensation, segregation and cell cycle progression. May participate in facilitating chromosome segregation by condensation DNA from both sides of a centrally located replisome during cell division. Probably acts via its interaction with MukB and MukF. The chain is Chromosome partition protein MukE from Vibrio vulnificus (strain CMCP6).